A 318-amino-acid chain; its full sequence is Thioredoxin reductase (318 aa).

36–43 serves as a coordination point for FAD; it reads TGLQQGGQ. Residues Cys-136 and Cys-139 are joined by a disulfide bond. Residue 286-295 coordinates FAD; the sequence is DVMDHNYRQA.

This sequence belongs to the class-II pyridine nucleotide-disulfide oxidoreductase family. In terms of assembly, homodimer. FAD serves as cofactor.

It is found in the cytoplasm. It catalyses the reaction [thioredoxin]-dithiol + NADP(+) = [thioredoxin]-disulfide + NADPH + H(+). The chain is Thioredoxin reductase (trxB) from Haemophilus influenzae (strain ATCC 51907 / DSM 11121 / KW20 / Rd).